The following is a 491-amino-acid chain: Chromosomal replication initiator protein DnaA (491 aa).

Residues 1–69 are domain I, interacts with DnaA modulators; sequence MTTWDKCLKK…TIQECHGNDL (69 aa). The domain II stretch occupies residues 69–154; sequence LIIEYSNKKF…KEDEEYSFGL (86 aa). The interval 155–371 is domain III, AAA+ region; it reads PLKEKYVFDS…GALNRVLTTS (217 aa). ATP contacts are provided by Gly-199, Gly-201, Lys-202, and Thr-203. The segment at 372–491 is domain IV, binds dsDNA; that stretch reads KFNHKDPTIE…YELLLDKISR (120 aa).

This sequence belongs to the DnaA family. In terms of assembly, oligomerizes as a right-handed, spiral filament on DNA at oriC.

It localises to the cytoplasm. In terms of biological role, plays an essential role in the initiation and regulation of chromosomal replication. ATP-DnaA binds to the origin of replication (oriC) to initiate formation of the DNA replication initiation complex once per cell cycle. Binds the DnaA box (a 9 base pair repeat at the origin) and separates the double-stranded (ds)DNA. Forms a right-handed helical filament on oriC DNA; dsDNA binds to the exterior of the filament while single-stranded (ss)DNA is stabiized in the filament's interior. The ATP-DnaA-oriC complex binds and stabilizes one strand of the AT-rich DNA unwinding element (DUE), permitting loading of DNA polymerase. After initiation quickly degrades to an ADP-DnaA complex that is not apt for DNA replication. Binds acidic phospholipids. This is Chromosomal replication initiator protein DnaA from Francisella tularensis subsp. holarctica (strain FTNF002-00 / FTA).